The primary structure comprises 639 residues: Threonine--tRNA ligase (639 aa).

Residues M1–T61 form the TGS domain. The segment at D242–P533 is catalytic. Residues C333, H384, and H510 each coordinate Zn(2+).

Belongs to the class-II aminoacyl-tRNA synthetase family. Homodimer. Zn(2+) is required as a cofactor.

The protein localises to the cytoplasm. It catalyses the reaction tRNA(Thr) + L-threonine + ATP = L-threonyl-tRNA(Thr) + AMP + diphosphate + H(+). Functionally, catalyzes the attachment of threonine to tRNA(Thr) in a two-step reaction: L-threonine is first activated by ATP to form Thr-AMP and then transferred to the acceptor end of tRNA(Thr). Also edits incorrectly charged L-seryl-tRNA(Thr). The protein is Threonine--tRNA ligase of Acidovorax sp. (strain JS42).